Consider the following 251-residue polypeptide: Core protein VP8 (251 aa).

Residues 1–32 constitute a propeptide, removed by core protease OPG083/I7; it reads MSLLLENLIEEDTIFFAGSISEYDDLQMVIAG.

It belongs to the orthopoxvirus OPG098 family. Undergoes morphogenesis-associated proteolysis which cleaves the 28 kDa to a 25-kDa product. Proteolytic cleavage of major core proteins P4a (OPG136/A10L), P4b (OPG129/A3L), and VP8 (OPG098/L4R), which occurs at a late stage of core formation, is required for production of infectious mature virions (MV).

The protein localises to the virion. The protein resides in the host cytoplasm. Functionally, major core structural protein. This is Core protein VP8 (OPG098) from Vaccinia virus (strain Western Reserve) (VACV).